We begin with the raw amino-acid sequence, 162 residues long: Endoribonuclease YbeY (162 aa).

Positions 117, 121, and 127 each coordinate Zn(2+).

The protein belongs to the endoribonuclease YbeY family. Zn(2+) serves as cofactor.

It localises to the cytoplasm. Its function is as follows. Single strand-specific metallo-endoribonuclease involved in late-stage 70S ribosome quality control and in maturation of the 3' terminus of the 16S rRNA. In Francisella tularensis subsp. novicida (strain U112), this protein is Endoribonuclease YbeY.